Consider the following 307-residue polypeptide: tRNA pseudouridine synthase B (307 aa).

Aspartate 38 (nucleophile) is an active-site residue.

Belongs to the pseudouridine synthase TruB family. Type 1 subfamily.

The catalysed reaction is uridine(55) in tRNA = pseudouridine(55) in tRNA. In terms of biological role, responsible for synthesis of pseudouridine from uracil-55 in the psi GC loop of transfer RNAs. This is tRNA pseudouridine synthase B from Bacillus anthracis.